We begin with the raw amino-acid sequence, 109 residues long: Small ribosomal subunit protein uS17 (109 aa).

This sequence belongs to the universal ribosomal protein uS17 family. As to quaternary structure, part of the 30S ribosomal subunit.

One of the primary rRNA binding proteins, it binds specifically to the 5'-end of 16S ribosomal RNA. In Methanococcoides burtonii (strain DSM 6242 / NBRC 107633 / OCM 468 / ACE-M), this protein is Small ribosomal subunit protein uS17.